The sequence spans 91 residues: UPF0358 protein SSP1677 (91 aa).

It belongs to the UPF0358 family.

This is UPF0358 protein SSP1677 from Staphylococcus saprophyticus subsp. saprophyticus (strain ATCC 15305 / DSM 20229 / NCIMB 8711 / NCTC 7292 / S-41).